Consider the following 4516-residue polypeptide: Dynein axonemal heavy chain 1 (4516 aa).

The stem stretch occupies residues 1-1748 (MVTLSISDTL…YIRAVNAEFI (1748 aa)). Positions 78–160 (SSGSDKSLKN…RKSPLAGTDK (83 aa)) are disordered. 2 stretches are compositionally biased toward basic and acidic residues: residues 83 to 97 (KSLKNGMEECDKEEA) and 113 to 129 (ENHDLEKMLKESSRNPE). AAA stretches follow at residues 1749–1956 (YGYE…VISA), 2016–2249 (QAIR…TTVK), 2422–2682 (TMMP…VFQG), and 2780–2972 (DYNQ…CCTI). The GPAGTGKT motif signature appears at 1787 to 1794 (GPAGTGKT). Residue 1787 to 1794 (GPAGTGKT) coordinates ATP. The short motif at 1837–1843 (CFDEFNR) is the CFDEFNR motif element. ATP is bound by residues 2054–2061 (GPTGSGKS), 2460–2467 (GPTGTGKT), and 2819–2826 (GVGGSGRS). A stalk region spans residues 2987-3285 (ATRFLHEIPE…MHKYHFVAKA (299 aa)). A coiled-coil region spans residues 3293 to 3394 (LREAQDDLEV…QDTVENLENM (102 aa)). AAA regions lie at residues 3388–3618 (VENL…EERP) and 3831–4050 (LPAF…SYNS).

The protein belongs to the dynein heavy chain family. In terms of assembly, consists of at least two heavy chains and a number of intermediate and light chains. In terms of tissue distribution, expressed in brain.

It localises to the cytoplasm. It is found in the cytoskeleton. The protein resides in the cilium axoneme. The protein localises to the cell projection. Its subcellular location is the cilium. It localises to the flagellum. Functionally, force generating protein of cilia required for sperm flagellum motility. Produces force towards the minus ends of microtubules. Dynein has ATPase activity; the force-producing power stroke is thought to occur on release of ADP. Required in spermatozoa for the formation of the inner dynein arms and biogenesis of the axoneme. This is Dynein axonemal heavy chain 1 from Rattus norvegicus (Rat).